The primary structure comprises 279 residues: Eukaryotic translation initiation factor 3 subunit G (279 aa).

Disordered stretches follow at residues 69–90 and 149–193; these read AKYG…QLGE and LNGG…EARD. At S77 the chain carries Phosphoserine. The RRM domain occupies 196–275; the sequence is TTLKVSQLNT…LILHLEWSKK (80 aa).

Belongs to the eIF-3 subunit G family. As to quaternary structure, component of the eukaryotic translation initiation factor 3 (eIF-3) complex.

It is found in the cytoplasm. Functionally, RNA-binding component of the eukaryotic translation initiation factor 3 (eIF-3) complex, which is involved in protein synthesis of a specialized repertoire of mRNAs and, together with other initiation factors, stimulates binding of mRNA and methionyl-tRNAi to the 40S ribosome. The eIF-3 complex specifically targets and initiates translation of a subset of mRNAs involved in cell proliferation. This subunit can bind 18S rRNA. This is Eukaryotic translation initiation factor 3 subunit G from Lodderomyces elongisporus (strain ATCC 11503 / CBS 2605 / JCM 1781 / NBRC 1676 / NRRL YB-4239) (Yeast).